Here is a 257-residue protein sequence, read N- to C-terminus: Large ribosomal subunit protein uL2 (257 aa).

Residues 207-230 (VEHPFGGGNHQHIGKPSTIRRDAP) are disordered.

This sequence belongs to the universal ribosomal protein uL2 family. As to quaternary structure, component of the large ribosomal subunit.

Its subcellular location is the cytoplasm. In terms of biological role, component of the large ribosomal subunit. The ribosome is a large ribonucleoprotein complex responsible for the synthesis of proteins in the cell. This chain is Large ribosomal subunit protein uL2 (rpl8), found in Danio rerio (Zebrafish).